The sequence spans 175 residues: Small ribosomal subunit protein uS9 (175 aa).

The protein belongs to the universal ribosomal protein uS9 family.

This Streptomyces griseus subsp. griseus (strain JCM 4626 / CBS 651.72 / NBRC 13350 / KCC S-0626 / ISP 5235) protein is Small ribosomal subunit protein uS9.